The sequence spans 276 residues: Triple specificity protein phosphatase PtpB (276 aa).

Cys160 functions as the Phosphocysteine intermediate in the catalytic mechanism. Positions 232 to 250 are UIM-like region; it reads LGVRAEYLAAARQTIDETY.

This sequence belongs to the protein-tyrosine phosphatase family. As to quaternary structure, interacts (via UIM-like region) with host ubiquitin; activating the phosphatidylinositol phosphate phosphatase activity.

The protein resides in the secreted. It is found in the host cytoplasm. Its subcellular location is the host cell membrane. The catalysed reaction is O-phospho-L-tyrosyl-[protein] + H2O = L-tyrosyl-[protein] + phosphate. It catalyses the reaction O-phospho-L-seryl-[protein] + H2O = L-seryl-[protein] + phosphate. The enzyme catalyses O-phospho-L-threonyl-[protein] + H2O = L-threonyl-[protein] + phosphate. It carries out the reaction 1,2-dioctanoyl-sn-glycero-3-phospho-(1-D-myo-inositol-3-phosphate) + H2O = 1,2-dioctanoyl-sn-glycero-3-phospho-(1D-myo-inositol) + phosphate. The catalysed reaction is 1,2-dioctanoyl-sn-glycero-3-phospho-(1-D-myo-inositol-4-phosphate) + H2O = 1,2-dioctanoyl-sn-glycero-3-phospho-(1D-myo-inositol) + phosphate. It catalyses the reaction 1,2-dioctanoyl-sn-glycero-3-phospho-(1D-myo-inositol-5-phosphate) + H2O = 1,2-dioctanoyl-sn-glycero-3-phospho-(1D-myo-inositol) + phosphate. With respect to regulation, binding to host ubiquitin is required to activate the phosphatidylinositol phosphate phosphatase activity. Phosphatase activity is inhibited by sodium orthovanadate, a specific inhibitor of tyrosine phosphatases, but not by okadaic acid, an inhibitor of serine/threonine phosphatases. Inhibition of the enzyme reduces mycobacterial survival in infected macrophages. Inhibitors also enhance killing efficacy by first-line antibiotics. Its function is as follows. Essential virulence factor that promotes mycobacterial survival within host macrophages. Acts as a phosphatase that possesses triple substrate specificity toward phosphotyrosine, phosphoserine/threonine and phosphoinositides. Supports mycobacteria survival during infection by modulating the normal host signaling pathways, attenuating the bactericidal immune responses and promoting the host cell survival. Inhibits host pyroptosis by disrupting the membrane localization of host gasdermin-D (GSDMD): acts by catalyzing dephosphorylation of phosphatidylinositol (4,5)-bisphosphate and phosphatidylinositol 4-phosphate, thereby inhibiting the membrane targeting of GSDMD and subsequent cytokine release and pyroptosis. Inhibits host inflammatory responses and apoptosis through impeding the NF-kappa-B and MAPK signal pathways and TP53/p53 expression in the macrophage. Blocks the IL6/IL-6 production by down-regulating ERK1/2, p38 and p65 activity. Prevents macrophage cell death by activating the Akt pathway and blocking caspase 3 activity. Reduces the expression of iNOS in activated macrophages and inhibits the generation of destroying reactive nitrogen intermediate NO. The chain is Triple specificity protein phosphatase PtpB from Mycobacterium tuberculosis (strain ATCC 25618 / H37Rv).